Reading from the N-terminus, the 588-residue chain is 2-(3-amino-3-carboxypropyl)histidine synthase subunit 2 (588 aa).

The [4Fe-4S] cluster site is built by C149, C170, and C402. Disordered regions lie at residues 454 to 485 and 546 to 588; these read DERN…VTGQ and GLGS…TKFQ. Residues 466 to 477 show a composition bias toward acidic residues; sequence DNNEEDSDDEAP. Over residues 579-588 the composition is skewed to basic and acidic residues; that stretch reads YDYDRETKFQ.

Belongs to the DPH1/DPH2 family. DPH2 subfamily. As to quaternary structure, component of the 2-(3-amino-3-carboxypropyl)histidine synthase complex composed of DPH1, DPH2, DPH3 and a NADH-dependent reductase, predominantly CBR1. The cofactor is [4Fe-4S] cluster.

The protein resides in the cytoplasm. Its pathway is protein modification; peptidyl-diphthamide biosynthesis. Required for the first step of diphthamide biosynthesis, a post-translational modification of histidine which occurs in elongation factor 2. DPH1 and DPH2 transfer a 3-amino-3-carboxypropyl (ACP) group from S-adenosyl-L-methionine (SAM) to a histidine residue, the reaction is assisted by a reduction system comprising DPH3 and a NADH-dependent reductase, predominantly CBR1. Facilitates the reduction of the catalytic iron-sulfur cluster found in the DPH1 subunit. This is 2-(3-amino-3-carboxypropyl)histidine synthase subunit 2 (DPH2) from Debaryomyces hansenii (strain ATCC 36239 / CBS 767 / BCRC 21394 / JCM 1990 / NBRC 0083 / IGC 2968) (Yeast).